The chain runs to 472 residues: Keratin, type I cytoskeletal 14 (472 aa).

The interval 1–114 (MTTCSRQFTS…AGGDGLLVGS (114 aa)) is head. The interval 115–150 (EKVTMQNLNDRLASYLDKVRALEEANADLEVKIRDW) is coil 1A. One can recognise an IF rod domain in the interval 115-426 (EKVTMQNLND…RLLEGEDAHL (312 aa)). A linker 1 region spans residues 151–168 (YQRQRPAEIKDYSPYFKT). The coil 1B stretch occupies residues 169–260 (IEDLRNKILT…KNHEEEMNAL (92 aa)). The interval 261 to 283 (RGQVGGDVNVEMDAAPGVDLSRI) is linker 12. The coil 2 stretch occupies residues 284–422 (LNEMRDQYEK…ATYRRLLEGE (139 aa)). The interval 423–472 (DAHLSSSQFSSGSQSSRDVTSSSRQIRTKVMDVHDGKVVSTHEQVLRTKN) is tail. The interaction with Type I keratins and keratin filaments stretch occupies residues 425-472 (HLSSSQFSSGSQSSRDVTSSSRQIRTKVMDVHDGKVVSTHEQVLRTKN). A disordered region spans residues 426-472 (LSSSQFSSGSQSSRDVTSSSRQIRTKVMDVHDGKVVSTHEQVLRTKN). Positions 427–445 (SSSQFSSGSQSSRDVTSSS) are enriched in low complexity. Ser435 bears the Phosphoserine mark.

This sequence belongs to the intermediate filament family. In terms of assembly, heterotetramer of two type I and two type II keratins. Forms a disulfide-linked heterodimer (via 2B domains) with KRT5 (via 2B domains). Forms a heterodimer with KRT1; the interaction is more abundant in the absence of KRT5. Interacts with PLEC isoform 1C, when in a heterodimer with KRT5. Interacts with TRADD and with keratin filaments. Associates with other type I keratins. Interacts with EPPK1. Interacts with KLHL24. Interacts with PKP1 (via N-terminus) and PKP2. Post-translationally, a disulfide bond is formed between rather than within filaments and promotes the formation of a keratin filament cage around the nucleus. Ubiquitinated by the BCR(KLHL24) E3 ubiquitin ligase complex. Expressed in the corneal epithelium (at protein level). Detected in the basal layer, lowered within the more apically located layers specifically in the stratum spinosum, stratum granulosum but is not detected in stratum corneum. Strongly expressed in the outer root sheath of anagen follicles but not in the germinative matrix, inner root sheath or hair. Found in keratinocytes surrounding the club hair during telogen.

It is found in the cytoplasm. The protein localises to the nucleus. Its function is as follows. The nonhelical tail domain is involved in promoting KRT5-KRT14 filaments to self-organize into large bundles and enhances the mechanical properties involved in resilience of keratin intermediate filaments in vitro. This chain is Keratin, type I cytoskeletal 14 (KRT14), found in Homo sapiens (Human).